A 95-amino-acid chain; its full sequence is Progonadoliberin-1 (95 aa).

The signal sequence occupies residues 1-23 (MAPQTSNLWLLLVVMMVMSQGCC). Q24 bears the Pyrrolidone carboxylic acid mark. Position 33 is a glycine amide (G33).

The protein belongs to the GnRH family.

It localises to the secreted. Its function is as follows. Stimulates the secretion of gonadotropins. The polypeptide is Progonadoliberin-1 (gnrh1) (Pagrus major (Red sea bream)).